We begin with the raw amino-acid sequence, 746 residues long: Exocyst complex component 3-like protein (746 aa).

Residues 1-23 (MDSAAKDEMQPALSPGPEWPEQE) form a disordered region. Residues 1–370 (MDSAAKDEMQ…DVSQLEPLLT (370 aa)) form a mediates interaction with EXOC2, EXOC4 and EXOC5 region.

This sequence belongs to the SEC6 family. Interacts with EXOC2, EXOC4 and EXOC5; may be part of the exocyst.

It is found in the cytoplasmic vesicle. The protein resides in the secretory vesicle. Functionally, as part of the exocyst, may play a role in regulated exocytosis of insulin granules. The polypeptide is Exocyst complex component 3-like protein (EXOC3L1) (Homo sapiens (Human)).